A 462-amino-acid chain; its full sequence is Chromosomal replication initiator protein DnaA (462 aa).

Residues methionine 1 to asparagine 86 form a domain I, interacts with DnaA modulators region. The segment at asparagine 86–serine 125 is domain II. The segment at asparagine 126–alanine 342 is domain III, AAA+ region. Glycine 170, glycine 172, lysine 173, and threonine 174 together coordinate ATP. Residues asparagine 343–serine 462 form a domain IV, binds dsDNA region.

This sequence belongs to the DnaA family. As to quaternary structure, oligomerizes as a right-handed, spiral filament on DNA at oriC.

It localises to the cytoplasm. In terms of biological role, plays an essential role in the initiation and regulation of chromosomal replication. ATP-DnaA binds to the origin of replication (oriC) to initiate formation of the DNA replication initiation complex once per cell cycle. Binds the DnaA box (a 9 base pair repeat at the origin) and separates the double-stranded (ds)DNA. Forms a right-handed helical filament on oriC DNA; dsDNA binds to the exterior of the filament while single-stranded (ss)DNA is stabiized in the filament's interior. The ATP-DnaA-oriC complex binds and stabilizes one strand of the AT-rich DNA unwinding element (DUE), permitting loading of DNA polymerase. After initiation quickly degrades to an ADP-DnaA complex that is not apt for DNA replication. Binds acidic phospholipids. This Photorhabdus laumondii subsp. laumondii (strain DSM 15139 / CIP 105565 / TT01) (Photorhabdus luminescens subsp. laumondii) protein is Chromosomal replication initiator protein DnaA.